We begin with the raw amino-acid sequence, 344 residues long: MSETQNHNSYGKPVEMTVIGAGSYGTSLAISLARNGANIVLWGHDAEHMARLDADRANHEFLPGIAFPDTLIVETDLQKAVQASRDLLVVVPSHVFGIVLKSLQPHLRADSRICWATKGLEPETGRLLQDVAHDVLGDSYPLAVLSGPTFAKELAMGMPTAISVASPDAQFVRDLQEKIHCSKTFRVYANSDFIGMQLGGAVKNVIAIGAGMSDGIGFGANARTALITRGLAEMSRLGAALGAQPETFMGMAGLGDLVLTCTDNQSRNRRFGLALGQGKDVDTAQTDIGQVVEGYRNTKEVWMLAKRMGVEMPIVEQIYQVLYQGKDARLAAQDLLARDKKMER.

The NADPH site is built by serine 23, tyrosine 24, histidine 44, and lysine 118. Sn-glycerol 3-phosphate is bound by residues lysine 118, glycine 147, and threonine 149. An NADPH-binding site is contributed by alanine 151. 5 residues coordinate sn-glycerol 3-phosphate: lysine 203, aspartate 256, serine 266, arginine 267, and asparagine 268. The active-site Proton acceptor is the lysine 203. NADPH is bound at residue arginine 267. Valine 291 and glutamate 293 together coordinate NADPH.

This sequence belongs to the NAD-dependent glycerol-3-phosphate dehydrogenase family.

It is found in the cytoplasm. The catalysed reaction is sn-glycerol 3-phosphate + NAD(+) = dihydroxyacetone phosphate + NADH + H(+). It carries out the reaction sn-glycerol 3-phosphate + NADP(+) = dihydroxyacetone phosphate + NADPH + H(+). The protein operates within membrane lipid metabolism; glycerophospholipid metabolism. Catalyzes the reduction of the glycolytic intermediate dihydroxyacetone phosphate (DHAP) to sn-glycerol 3-phosphate (G3P), the key precursor for phospholipid synthesis. The sequence is that of Glycerol-3-phosphate dehydrogenase [NAD(P)+] from Vibrio cholerae serotype O1 (strain ATCC 39541 / Classical Ogawa 395 / O395).